The primary structure comprises 239 residues: Leucine rich adaptor protein 1 (239 aa).

LRR repeat units lie at residues 55–83 and 93–114; these read LGDK…LVTL and LLEE…QYSL. A compositionally biased stretch (low complexity) spans 107-116; sequence LTSSQYSLTG. Disordered stretches follow at residues 107 to 139 and 200 to 219; these read LTSS…TDRL and KPPG…DESA. 4 positions are modified to phosphoserine: S118, S126, S129, and S213.

In terms of assembly, forms a tripartite complex with CDC42BPA/CDC42BPB and MYO18A acting as an adapter connecting both. Its binding to CDC42BPA/CDC42BPB results in their activation by abolition of their negative autoregulation. Interacts with CDC42BPA and CDC42BPB.

It is found in the cytoplasm. Acts as an activator of the canonical NF-kappa-B pathway and drive the production of pro-inflammatory cytokines. Promotes the antigen (Ag)-presenting and priming function of dendritic cells via the canonical NF-kappa-B pathway. In concert with MYO18A and CDC42BPA/CDC42BPB, is involved in modulating lamellar actomyosin retrograde flow that is crucial to cell protrusion and migration. Activates CDC42BPA/CDC42BPB and targets it to actomyosin through its interaction with MYO18A, leading to MYL9/MLC2 phosphorylation and MYH9/MYH10-dependent actomyosin assembly in the lamella. This chain is Leucine rich adaptor protein 1 (LURAP1), found in Homo sapiens (Human).